An 85-amino-acid polypeptide reads, in one-letter code: MAHKKAGGSTRNGRDSEAKRLGVKRFGGEAVLAGSIIVRQRGTKFHAGTNVGCGRDHTLFALTDGKVKFEVKGPKNRKFISIVAE.

Residues 1–20 (MAHKKAGGSTRNGRDSEAKR) are disordered.

This sequence belongs to the bacterial ribosomal protein bL27 family.

This chain is Large ribosomal subunit protein bL27, found in Klebsiella pneumoniae (strain 342).